The following is a 667-amino-acid chain: Chaperone protein DnaK (667 aa).

Residue T196 is modified to Phosphothreonine; by autocatalysis. Disordered stretches follow at residues 495–525 (EANSGLSDEEIEKMKEEAEQHAEEDERRKER) and 595–667 (AGEE…GDDE). The span at 506-525 (EKMKEEAEQHAEEDERRKER) shows a compositional bias: basic and acidic residues. Residues 595–612 (AGEEIREAQQQQAQQGAA) are compositionally biased toward low complexity. The span at 630-641 (GPAGGPTGGPAS) shows a compositional bias: gly residues. Acidic residues predominate over residues 647-667 (DSDEEDVQDADYEVVDEGDDE).

Belongs to the heat shock protein 70 family.

Functionally, acts as a chaperone. The sequence is that of Chaperone protein DnaK from Salinibacter ruber (strain DSM 13855 / M31).